Here is a 165-residue protein sequence, read N- to C-terminus: Dihydrofolate reductase type A13 (165 aa).

The 156-residue stretch at 7–162 (RIYLVAAMGA…ITYTHSVYAR (156 aa)) folds into the DHFR domain.

The protein belongs to the dihydrofolate reductase family. Homodimer.

The catalysed reaction is (6S)-5,6,7,8-tetrahydrofolate + NADP(+) = 7,8-dihydrofolate + NADPH + H(+). The protein operates within cofactor biosynthesis; tetrahydrofolate biosynthesis; 5,6,7,8-tetrahydrofolate from 7,8-dihydrofolate: step 1/1. In terms of biological role, key enzyme in folate metabolism. Catalyzes an essential reaction for de novo glycine and purine synthesis, and for DNA precursor synthesis. The sequence is that of Dihydrofolate reductase type A13 (dfrA13) from Escherichia coli.